A 130-amino-acid chain; its full sequence is UPF0251 protein MmarC6_0272 (130 aa).

It belongs to the UPF0251 family.

The sequence is that of UPF0251 protein MmarC6_0272 from Methanococcus maripaludis (strain C6 / ATCC BAA-1332).